The primary structure comprises 356 residues: sn-glycerol-3-phosphate import ATP-binding protein UgpC (356 aa).

The 232-residue stretch at 4–235 folds into the ABC transporter domain; sequence LKLQAVTKSW…PASLFVASFI (232 aa). 37 to 44 serves as a coordination point for ATP; that stretch reads GPSGCGKS.

This sequence belongs to the ABC transporter superfamily. sn-glycerol-3-phosphate importer (TC 3.A.1.1.3) family. In terms of assembly, the complex is composed of two ATP-binding proteins (UgpC), two transmembrane proteins (UgpA and UgpE) and a solute-binding protein (UgpB).

It localises to the cell inner membrane. The catalysed reaction is sn-glycerol 3-phosphate(out) + ATP + H2O = sn-glycerol 3-phosphate(in) + ADP + phosphate + H(+). In terms of biological role, part of the ABC transporter complex UgpBAEC involved in sn-glycerol-3-phosphate (G3P) import. Responsible for energy coupling to the transport system. The polypeptide is sn-glycerol-3-phosphate import ATP-binding protein UgpC (Escherichia coli (strain UTI89 / UPEC)).